Reading from the N-terminus, the 1040-residue chain is Multidrug resistance protein MdtB (1040 aa).

12 helical membrane-spanning segments follow: residues 16–36 (FIMR…AGII), 347–367 (LMMA…NIPA), 369–389 (IIPG…MVFL), 396–416 (LTLM…IVVI), 440–460 (IGFT…PLLF), 472–492 (FAIT…TLTP), 537–557 (WLTL…WVFI), 863–883 (LGST…VLGI), 888–908 (FIHP…ALLA), 911–931 (IAGS…IGIV), 968–988 (ILMT…STGV), and 998–1018 (IGMV…TPVI).

It belongs to the resistance-nodulation-cell division (RND) (TC 2.A.6) family. MdtB subfamily. In terms of assembly, part of a tripartite efflux system composed of MdtA, MdtB and MdtC. MdtB forms a heteromultimer with MdtC.

The protein resides in the cell inner membrane. The MdtABC tripartite complex confers resistance against novobiocin and deoxycholate. This Escherichia coli O17:K52:H18 (strain UMN026 / ExPEC) protein is Multidrug resistance protein MdtB.